Here is a 64-residue protein sequence, read N- to C-terminus: Large ribosomal subunit protein bL35 (64 aa).

The protein belongs to the bacterial ribosomal protein bL35 family.

The polypeptide is Large ribosomal subunit protein bL35 (Micrococcus luteus (strain ATCC 4698 / DSM 20030 / JCM 1464 / CCM 169 / CCUG 5858 / IAM 1056 / NBRC 3333 / NCIMB 9278 / NCTC 2665 / VKM Ac-2230) (Micrococcus lysodeikticus)).